A 102-amino-acid polypeptide reads, in one-letter code: ATP-dependent Clp protease adapter protein ClpS (102 aa).

Belongs to the ClpS family. In terms of assembly, binds to the N-terminal domain of the chaperone ClpA.

Involved in the modulation of the specificity of the ClpAP-mediated ATP-dependent protein degradation. This is ATP-dependent Clp protease adapter protein ClpS from Shewanella pealeana (strain ATCC 700345 / ANG-SQ1).